Reading from the N-terminus, the 244-residue chain is RNA transcription, translation and transport factor protein (244 aa).

Residues K20, K62, and K98 each carry the N6-acetyllysine modification.

It belongs to the RTRAF family. In terms of assembly, homodimer. Interacts with FAM98A (via N- and C-terminus). Interacts with NIN; which may prevent phosphorylation of NIN. Interacts with POLR2A. Component of a tRNA-splicing ligase complex with FAM98B, DDX1 and RTCB. (Microbial infection) Interacts with influenza A virus (IAV) RNA polymerase subunits PA, PB1 and PB2, and nucleocapsid NP. Associates with IAV polymerase complexes both in the nucleus and cytosol. Associates with IAV ribonucleoproteins (vRNP) packaged in virions. Interacts with hepatitis C virus core protein p19. In terms of tissue distribution, widely expressed. Expressed at high level in heart and skeletal muscle. Expressed at intermediate level in liver, pancreas, fetal brain and fetal lung. Weakly expressed in adult brain, adult lung, placenta, fetal liver and fetal kidney. Overexpressed in many brain tumors.

Its subcellular location is the nucleus. The protein resides in the cytoplasm. The protein localises to the cytosol. It localises to the perinuclear region. It is found in the cytoskeleton. Its subcellular location is the microtubule organizing center. The protein resides in the centrosome. In terms of biological role, RNA-binding protein involved in modulation of mRNA transcription by Polymerase II. Component of the tRNA-splicing ligase complex and is required for tRNA ligation. May be required for RNA transport. (Microbial infection) In case of infection by influenza virus A (IVA), is involved in viral replication. The polypeptide is RNA transcription, translation and transport factor protein (Homo sapiens (Human)).